Reading from the N-terminus, the 147-residue chain is Large ribosomal subunit protein uL15 (147 aa).

The interval 1–42 (MTIKVHHLRPAPGAKTTKTRVGRGEGSKGKTAGRGTKGSKAR) is disordered.

The protein belongs to the universal ribosomal protein uL15 family. Part of the 50S ribosomal subunit.

Functionally, binds to the 23S rRNA. The sequence is that of Large ribosomal subunit protein uL15 from Salinispora tropica (strain ATCC BAA-916 / DSM 44818 / JCM 13857 / NBRC 105044 / CNB-440).